A 628-amino-acid chain; its full sequence is MTWSQDLAHKTYSILHWADGYFEVNDAGQMVVMPVGRDGVRISLPEVVDAARAAGAKLPLLLRFPDILGHRLGKLQAAFAQAQSEWEYAGGYTAVYPIKVNQHRGVAGVLASHQGDGFGLEAGSKPELMAVLALSRPGGLIVCNGYKDREYIRLALIGRKLGLKTFIVIEKPSELRMVLEEAKTLGVLPGLGVRVRLASLGAGKWQNSGGDKAKFGLSPRQVLDVWKVLRGTEYADCLNVMHFHMGSQISNVRDIAKGMREATRYFVELSRLGAKITHVDVGGGLGIDYEGTRSRSDCSINYGLQAYASHIVQPLASACEDYDLVPPRIVTECGRAMTAHHAVLIANVTEVEAVPEGRVPGVCDDEPAVVRHMREIYGELDARPAIELFYEAQHFHAEGLAAYTLGQIDLVHRARIDDLFYAISHGVRERLSHEEKSHRPVLDELNERLVDKYFVNFSVFESIPDVWAINQIFPIVPIERLNEAPTRRGVVCDLTCDSDGTVKQYVENESLDSALPLHVLRHGEAYRIGFFLVGAYQEILGDIHNLFGDTDAVEVAVDGRGYRIAQQRCGDTTDVMLDYVGYALDEVRRVYAQRITAAGMSAAESKALSDMLEAGLTGYPYLSDVPLE.

K99 is modified (N6-(pyridoxal phosphate)lysine). 279 to 289 (VDVGGGLGIDY) is a substrate binding site.

It belongs to the Orn/Lys/Arg decarboxylase class-II family. SpeA subfamily. Mg(2+) is required as a cofactor. Pyridoxal 5'-phosphate serves as cofactor.

It carries out the reaction L-arginine + H(+) = agmatine + CO2. Functionally, catalyzes the biosynthesis of agmatine from arginine. The sequence is that of Biosynthetic arginine decarboxylase from Xylella fastidiosa (strain 9a5c).